The following is a 408-amino-acid chain: LL-diaminopimelate aminotransferase (408 aa).

Positions 15 and 42 each coordinate substrate. Pyridoxal 5'-phosphate contacts are provided by residues Y72, S108–K109, Y132, N187, Y218, and S246–S248. Positions 109, 132, and 187 each coordinate substrate. K249 is modified (N6-(pyridoxal phosphate)lysine). R257 and N292 together coordinate pyridoxal 5'-phosphate. Positions 292 and 388 each coordinate substrate.

This sequence belongs to the class-I pyridoxal-phosphate-dependent aminotransferase family. LL-diaminopimelate aminotransferase subfamily. Homodimer. It depends on pyridoxal 5'-phosphate as a cofactor.

It carries out the reaction (2S,6S)-2,6-diaminopimelate + 2-oxoglutarate = (S)-2,3,4,5-tetrahydrodipicolinate + L-glutamate + H2O + H(+). The protein operates within amino-acid biosynthesis; L-lysine biosynthesis via DAP pathway; LL-2,6-diaminopimelate from (S)-tetrahydrodipicolinate (aminotransferase route): step 1/1. Its function is as follows. Involved in the synthesis of meso-diaminopimelate (m-DAP or DL-DAP), required for both lysine and peptidoglycan biosynthesis. Catalyzes the direct conversion of tetrahydrodipicolinate to LL-diaminopimelate. The polypeptide is LL-diaminopimelate aminotransferase (Leptospira interrogans serogroup Icterohaemorrhagiae serovar Lai (strain 56601)).